A 339-amino-acid polypeptide reads, in one-letter code: DNA-directed RNA polymerase subunit alpha (339 aa).

The tract at residues 1–233 (MVREEVAGST…DLFLPFLHAE (233 aa)) is alpha N-terminal domain (alpha-NTD). The tract at residues 264-339 (KKGIPLNCIF…IDLLKNKLSF (76 aa)) is alpha C-terminal domain (alpha-CTD).

The protein belongs to the RNA polymerase alpha chain family. In terms of assembly, in plastids the minimal PEP RNA polymerase catalytic core is composed of four subunits: alpha, beta, beta', and beta''. When a (nuclear-encoded) sigma factor is associated with the core the holoenzyme is formed, which can initiate transcription.

Its subcellular location is the plastid. It is found in the chloroplast. The enzyme catalyses RNA(n) + a ribonucleoside 5'-triphosphate = RNA(n+1) + diphosphate. In terms of biological role, DNA-dependent RNA polymerase catalyzes the transcription of DNA into RNA using the four ribonucleoside triphosphates as substrates. This chain is DNA-directed RNA polymerase subunit alpha, found in Bromus inermis (Smooth brome grass).